The sequence spans 345 residues: GTPase Obg (345 aa).

The Obg domain occupies 1–159 (MKFLDQAKVY…KWIWLRLKLI (159 aa)). Residues 160–327 (ADAGLVGLPN…ALRALLAVID (168 aa)) form the OBG-type G domain. Residues 166 to 173 (GLPNAGKS), 191 to 195 (FTTLH), 212 to 215 (DIPG), 279 to 282 (SKID), and 308 to 310 (SSQ) contribute to the GTP site. 2 residues coordinate Mg(2+): Ser-173 and Thr-193.

Belongs to the TRAFAC class OBG-HflX-like GTPase superfamily. OBG GTPase family. Monomer. Requires Mg(2+) as cofactor.

Its subcellular location is the cytoplasm. An essential GTPase which binds GTP, GDP and possibly (p)ppGpp with moderate affinity, with high nucleotide exchange rates and a fairly low GTP hydrolysis rate. Plays a role in control of the cell cycle, stress response, ribosome biogenesis and in those bacteria that undergo differentiation, in morphogenesis control. The polypeptide is GTPase Obg (Azorhizobium caulinodans (strain ATCC 43989 / DSM 5975 / JCM 20966 / LMG 6465 / NBRC 14845 / NCIMB 13405 / ORS 571)).